A 184-amino-acid polypeptide reads, in one-letter code: MNEQADMILLEIEEKMEKSLEALGREYAAVRTGRANPNILDRIMVSYYGVDTPLKQVASISVPEAQQLYIKPFDKSILKDIETAINTSSLELPPRNDGTGIRLTLPALTGERRRSLVKDVEKMAEAGKVAIRHIRRDGNEHLKKLGLTEDDEKGYLEDVQALTDAYVKKVDELTKEKSEELLDV.

The protein belongs to the RRF family.

It is found in the cytoplasm. In terms of biological role, responsible for the release of ribosomes from messenger RNA at the termination of protein biosynthesis. May increase the efficiency of translation by recycling ribosomes from one round of translation to another. The protein is Ribosome-recycling factor of Acholeplasma laidlawii (strain PG-8A).